The primary structure comprises 150 residues: Ribosome maturation factor RimP (150 aa).

Belongs to the RimP family.

It localises to the cytoplasm. Functionally, required for maturation of 30S ribosomal subunits. This chain is Ribosome maturation factor RimP, found in Klebsiella pneumoniae (strain 342).